A 269-amino-acid chain; its full sequence is S-adenosylmethionine decarboxylase proenzyme (269 aa).

Ser118 acts as the Schiff-base intermediate with substrate; via pyruvic acid in catalysis. Ser118 is modified (pyruvic acid (Ser); by autocatalysis). The active-site Proton acceptor; for processing activity is His123. Residue Cys146 is the Proton donor; for catalytic activity of the active site.

The protein belongs to the prokaryotic AdoMetDC family. Type 2 subfamily. In terms of assembly, heterooctamer of four alpha and four beta chains arranged as a tetramer of alpha/beta heterodimers. The cofactor is pyruvate. In terms of processing, is synthesized initially as an inactive proenzyme. Formation of the active enzyme involves a self-maturation process in which the active site pyruvoyl group is generated from an internal serine residue via an autocatalytic post-translational modification. Two non-identical subunits are generated from the proenzyme in this reaction, and the pyruvate is formed at the N-terminus of the alpha chain, which is derived from the carboxyl end of the proenzyme. The post-translation cleavage follows an unusual pathway, termed non-hydrolytic serinolysis, in which the side chain hydroxyl group of the serine supplies its oxygen atom to form the C-terminus of the beta chain, while the remainder of the serine residue undergoes an oxidative deamination to produce ammonia and the pyruvoyl group blocking the N-terminus of the alpha chain.

It carries out the reaction S-adenosyl-L-methionine + H(+) = S-adenosyl 3-(methylsulfanyl)propylamine + CO2. It participates in amine and polyamine biosynthesis; S-adenosylmethioninamine biosynthesis; S-adenosylmethioninamine from S-adenosyl-L-methionine: step 1/1. Catalyzes the decarboxylation of S-adenosylmethionine to S-adenosylmethioninamine (dcAdoMet), the propylamine donor required for the synthesis of the polyamines spermine and spermidine from the diamine putrescine. This chain is S-adenosylmethionine decarboxylase proenzyme, found in Brevibacillus brevis (strain 47 / JCM 6285 / NBRC 100599).